Here is a 107-residue protein sequence, read N- to C-terminus: uncharacterized protein (107 aa).

This is an uncharacterized protein from Acidianus sp. F28 (AFV-2).